Consider the following 446-residue polypeptide: Trigger factor (446 aa).

Residues 182–267 (GDKVVVDYQN…VKNIFMMKAI (86 aa)) form the PPIase FKBP-type domain.

It belongs to the FKBP-type PPIase family. Tig subfamily.

It localises to the cytoplasm. It carries out the reaction [protein]-peptidylproline (omega=180) = [protein]-peptidylproline (omega=0). Functionally, involved in protein export. Acts as a chaperone by maintaining the newly synthesized protein in an open conformation. Functions as a peptidyl-prolyl cis-trans isomerase. This chain is Trigger factor, found in Ehrlichia ruminantium (strain Gardel).